Here is a 490-residue protein sequence, read N- to C-terminus: Protein OrfX3 (490 aa).

This sequence belongs to the TULIP P47 family. As to quaternary structure, part of a crude toxin extract that includes BoNTA2/NTNH, P47, OrfX2 and OrfX3; OrfX1 was not detected. Shorter forms of this protein are seen in vivo.

Part of a botulinum neurotoxin type A2 (BoNT) locus; may be part of a progenitor toxin complex required to protect BoNT during its passage through the host gastrointestinal tract. The chain is Protein OrfX3 (orfX3) from Clostridium botulinum (strain Kyoto / Type A2).